A 196-amino-acid polypeptide reads, in one-letter code: Nodulation protein A (196 aa).

This sequence belongs to the NodA family.

It is found in the cytoplasm. Functionally, N-acyltransferase required for nodulation. Acts in the production of a small, heat-stable compound (Nod) that stimulates mitosis in various plant protoplasts. This Mesorhizobium sp. (strain 7653R) protein is Nodulation protein A.